The primary structure comprises 737 residues: Fibronectin type III domain-containing protein 7 (737 aa).

Positions 1-25 (MAGRPEKCFSLIRFTLLCLKMVISS) are cleaved as a signal peptide. Fibronectin type-III domains follow at residues 28-115 (APEI…TVLA), 116-203 (APVL…SPRA), 204-288 (PANI…TVAC), 289-373 (APGR…TAPC), 374-459 (CPND…TAPC), 460-544 (SPEI…TVPC), 545-633 (CPAG…CPLG), and 631-715 (PLGV…YSVT). Asparagine 230 carries an N-linked (GlcNAc...) asparagine glycan. Residue asparagine 433 is glycosylated (N-linked (GlcNAc...) asparagine).

The protein localises to the secreted. This Mus musculus (Mouse) protein is Fibronectin type III domain-containing protein 7 (Fndc7).